The sequence spans 652 residues: Engulfment and cell motility protein 3 (652 aa).

Positions 307-479 constitute an ELMO domain; sequence EQREQLQALR…VVREQLARTL (173 aa).

In terms of assembly, probably interacts directly with the SH3-domain of DOCK1 via its SH3-binding site. Part of a complex with DOCK1 and RAC1. Interacts with ADGRB3.

It is found in the cytoplasm. In terms of biological role, involved in cytoskeletal rearrangements required for phagocytosis of apoptotic cells and cell motility. Acts in association with DOCK1 and CRK. Was initially proposed to be required in complex with DOCK1 to activate Rac Rho small GTPases. May enhance the guanine nucleotide exchange factor (GEF) activity of DOCK1. The protein is Engulfment and cell motility protein 3 (ELMO3) of Bos taurus (Bovine).